A 704-amino-acid chain; its full sequence is MAAEVYFGDLELFEPFDHPEESIPEPVHTRFKDDDEEDENGVGDAELRERLRQCEETIEQLRAENQELKRKLNILTRPSGILVNDTKLDGPILQILFMNNAISKQYHQEIEEFVSNLVKRFEEQQKNDVEKTSFNLLPQPSSIVLEEDHKVEEACAIKNNKEAFSVVGSVLYFTNFCLDKLGQPLLNENPQLSEGWEIPKYHQVFSHIVSLEGQEIQVKAKRPKPHCFNCGSEEHQMKDCPMPRNAARISEKRKEYMDACGEANNQNFQQRYHAEEVEERFGRFKPGVISEELQDALGVTDKSLPPFIYRMRQLGYPPGWLKEAELENSGLALYDGKDGTDGETEVGEIQQNKSVTYDLSKLVNYPGFNISTPRGIPDEWRIFGSIPMQACQQKDVFANYLTSNFQAPGVKSGNKRSSSHSSPGSPKKQKKESNSAGSPADMELDSDMEVPHGSQSSESFQFQPPLPPDTPPLPRGTPPPIFTPPLPKGTPPLTPSDSPQTRTASGAVDEDALTLEELEEQQRRIWAALEQAESLNSDSDAPVDTPLTGNSVASSPCPNELDLPIPEGKTSEKQTLDEPEVPEIFTDKSEAGHASSPDCEVTSLCQKKAELAPVNTEGALLDNGSVVPNCDISNGGSQKLVPADTSPSMATKIHSPIPDMSKFATGITPFEFENMAESTGMYLRIRSLLKNSPRNQQKNKKASE.

Ala-2 is modified (N-acetylalanine). Residues 16-33 (FDHPEESIPEPVHTRFKD) show a composition bias toward basic and acidic residues. A disordered region spans residues 16–43 (FDHPEESIPEPVHTRFKDDDEEDENGVG). Residues 43–78 (GDAELRERLRQCEETIEQLRAENQELKRKLNILTRP) adopt a coiled-coil conformation. The CCHC-type zinc finger occupies 225-242 (PHCFNCGSEEHQMKDCPM). RBM7 binding regions lie at residues 284–297 (FKPG…QDAL) and 307–322 (FIYR…GWLK). The residue at position 340 (Thr-340) is a Phosphothreonine. Disordered regions lie at residues 407 to 516 (APGV…LTLE) and 529 to 599 (LEQA…SPDC). A Glycyl lysine isopeptide (Lys-Gly) (interchain with G-Cter in SUMO2) cross-link involves residue Lys-411. Over residues 454-463 (SQSSESFQFQ) the composition is skewed to low complexity. The span at 464 to 494 (PPLPPDTPPLPRGTPPPIFTPPLPKGTPPLT) shows a compositional bias: pro residues. A phosphothreonine mark is found at Thr-470, Thr-477, Thr-483, and Thr-490. The stretch at 514-538 (TLEELEEQQRRIWAALEQAESLNSD) forms a coiled coil. Residues 547–557 (LTGNSVASSPC) are compositionally biased toward polar residues. At Thr-575 the chain carries Phosphothreonine. Ser-596 carries the phosphoserine modification. Phosphothreonine is present on Thr-645. 3 positions are modified to phosphoserine: Ser-646, Ser-655, and Ser-692. The interval 656-704 (PIPDMSKFATGITPFEFENMAESTGMYLRIRSLLKNSPRNQQKNKKASE) is MTREX binding.

This sequence belongs to the ZCCHC8 family. Component of a nuclear TRAMP-like complex, an ATP-dependent exosome regulatory complex consisting of a helicase (MTREX), an oligadenylate polymerase (TENT4B or TENT4A), and a substrate specific RNA-binding factor (ZCCHC7 or ZCCHC8). Several TRAMP-like complexes exist with specific compositions and are associated with nuclear, or nucleolar RNA exosomes. Identified in the spliceosome C complex. Component of the nuclear exosome targeting (NEXT) complex composed of MTREX, ZCCHC8, and RBM7 that directs a subset of non-coding short-lived RNAs for exosomal degradation. Interacts with proteins involved in RNA processing and degradation such as MTREX and RBM7; interaction with MTREX enhances MTREX RNA helicase activity and bridges between RBM7 and MTREX. Interacts with TERC, the telomerase RNA component. Post-translationally, phosphorylation at Thr-490 by GSK3 is triggered in cells entering mitosis.

It is found in the nucleus. The protein resides in the nucleoplasm. In terms of biological role, scaffolding subunit of the trimeric nuclear exosome targeting (NEXT) complex that is involved in the surveillance and turnover of aberrant transcripts and non-coding RNAs. NEXT functions as an RNA exosome cofactor that directs a subset of non-coding short-lived RNAs for exosomal degradation. May be involved in pre-mRNA splicing. It is required for 3'-end maturation of telomerase RNA component (TERC), TERC 3'-end targeting to the nuclear RNA exosome, and for telomerase function. This chain is Zinc finger CCHC domain-containing protein 8 (ZCCHC8), found in Pongo abelii (Sumatran orangutan).